The following is a 569-amino-acid chain: Toxin YxiD (569 aa).

Residues 1 to 235 (MKTLDVHALH…NPQMKQADDS (235 aa)) enclose the LXG domain. Positions 8-91 (ALHEGIQHTI…QHAISSVESN (84 aa)) form a coiled coil. The interval 548 to 569 (HQAGIHGTGSPANELFKGGKKK) is disordered.

This sequence in the N-terminal section; belongs to the LXG family. In terms of assembly, probably interacts with cognate immunity protein YxxD but not with non-cognate immunity proteins. The interaction inhibits the toxic activity of YxxD.

The protein localises to the secreted. Its function is as follows. Toxic component of one of 6 LXG toxin-immunity modules in this strain. They promote kin selection, mediate competition in biofilms, and drive spatial segregation of different strains, indicating that LXG toxins may help avoid warfare between strains in biofilms. Mediates intercellular competition during biofilm formation; disruption of the operon disadvantages the bacteria, but overexpression of the cognate immunity protein restores growth in competition with wild-type. Overexpression alone in situ causes growth arrest but not cell lysis, a large decrease in chromosomal DNA content and the production of anucleate cells. No effect is seen on rRNA. Co-overexpression with cognate immunity protein YxxD does not cause growth arrest. The toxic effect is not dependent on the epsA and tapA operons which are required for biofilm formation. In Bacillus subtilis (strain 168), this protein is Toxin YxiD (yxiD).